A 367-amino-acid polypeptide reads, in one-letter code: Eukaryotic translation initiation factor 3 subunit H (367 aa).

The MPN domain occupies 14–166; it reads VQVEALVVMK…LRAFRLSPNF (153 aa).

The protein belongs to the eIF-3 subunit H family. In terms of assembly, component of the eukaryotic translation initiation factor 3 (eIF-3) complex.

The protein localises to the cytoplasm. In terms of biological role, component of the eukaryotic translation initiation factor 3 (eIF-3) complex, which is involved in protein synthesis of a specialized repertoire of mRNAs and, together with other initiation factors, stimulates binding of mRNA and methionyl-tRNAi to the 40S ribosome. The eIF-3 complex specifically targets and initiates translation of a subset of mRNAs involved in cell proliferation. The protein is Eukaryotic translation initiation factor 3 subunit H of Sclerotinia sclerotiorum (strain ATCC 18683 / 1980 / Ss-1) (White mold).